Consider the following 134-residue polypeptide: uncharacterized protein (134 aa).

3 consecutive transmembrane segments (helical) span residues 26-46 (VAVF…GNIG), 55-75 (LLKF…QIIV), and 101-121 (YAPM…GLIL).

It localises to the membrane. This is an uncharacterized protein from Dictyostelium discoideum (Social amoeba).